We begin with the raw amino-acid sequence, 166 residues long: Small ribosomal subunit protein uS5 (166 aa).

Positions 11–74 (LEDRVVAINR…DAARKNLIEV (64 aa)) constitute an S5 DRBM domain.

This sequence belongs to the universal ribosomal protein uS5 family. Part of the 30S ribosomal subunit. Contacts proteins S4 and S8.

In terms of biological role, with S4 and S12 plays an important role in translational accuracy. Functionally, located at the back of the 30S subunit body where it stabilizes the conformation of the head with respect to the body. The protein is Small ribosomal subunit protein uS5 of Ligilactobacillus salivarius (strain UCC118) (Lactobacillus salivarius).